Reading from the N-terminus, the 500-residue chain is Probable malate:quinone oxidoreductase (500 aa).

Belongs to the MQO family. It depends on FAD as a cofactor.

The catalysed reaction is (S)-malate + a quinone = a quinol + oxaloacetate. It functions in the pathway carbohydrate metabolism; tricarboxylic acid cycle; oxaloacetate from (S)-malate (quinone route): step 1/1. In Bacillus cereus (strain ATCC 10987 / NRS 248), this protein is Probable malate:quinone oxidoreductase.